The chain runs to 478 residues: MAPNAADKCPVMGNSGEKCPVMSSSTQSRGPRDIYTLEALSHFNREKIPERAVHAKGTGAYGEFEVTADISDICNIDMLLGVGKKTQCVTRFSTTGLERGSSDGVRDLKGMAVKFFTEQGDWDWVSLNFPFFFIRDPAKFPDMIHSQRRDPQTNLLNPNMTWDFVTKNPEALHMTLLQHSDFGTMFTWRTLSSYVGHAFKWVMPDGSFKYVHFFLASDRGPNFTDGSTAKVDPNDPDFATKDLFEAIERGDYPSWTANVQVVDPKDAPKLGFNILDLTKHWNLGTYPKGLDTIPSRPFGKLTLNRNVKDYFSEVEKLAFSPSNLVPGVEPSEDPILQARMFAYPDAQRYRLGIDHLKAPLRRKETACQHDLGPEFEKWLSQVTSEAWSHPHEDDYKFAREYYEVLPEFRSQEFQDRMVENLCKSIAPGPEELRKRVYDTFELVSSELARRLREGAEAIVAEKARPDSPSRAQPGQLRL.

The active site involves histidine 54. Heme is bound at residue tyrosine 343. Positions 459–478 (VAEKARPDSPSRAQPGQLRL) are disordered.

This sequence belongs to the catalase family. Heme is required as a cofactor.

It functions in the pathway alkaloid biosynthesis; ergot alkaloid biosynthesis. Its function is as follows. Catalase; part of the gene cluster that mediates the biosynthesis of fungal ergot alkaloid. DmaW catalyzes the first step of ergot alkaloid biosynthesis by condensing dimethylallyl diphosphate (DMAP) and tryptophan to form 4-dimethylallyl-L-tryptophan. The second step is catalyzed by the methyltransferase easF that methylates 4-dimethylallyl-L-tryptophan in the presence of S-adenosyl-L-methionine, resulting in the formation of 4-dimethylallyl-L-abrine. The catalase easC and the FAD-dependent oxidoreductase easE then transform 4-dimethylallyl-L-abrine to chanoclavine-I which is further oxidized by easD in the presence of NAD(+), resulting in the formation of chanoclavine-I aldehyde. Chanoclavine-I aldehyde is the precursor of ergoamides and ergopeptines in Clavicipitaceae, and clavine-type alcaloids such as fumiclavine in Trichocomaceae. However, the metabolites downstream of chanoclavine-I aldehyde in Arthrodermataceae have not been identified yet. This is Catalase easC from Trichophyton verrucosum (strain HKI 0517).